The sequence spans 274 residues: Hydroxyethylthiazole kinase (274 aa).

Met54 contributes to the substrate binding site. ATP contacts are provided by Arg129 and Thr175. Gly202 provides a ligand contact to substrate.

The protein belongs to the Thz kinase family. The cofactor is Mg(2+).

The enzyme catalyses 5-(2-hydroxyethyl)-4-methylthiazole + ATP = 4-methyl-5-(2-phosphooxyethyl)-thiazole + ADP + H(+). Its pathway is cofactor biosynthesis; thiamine diphosphate biosynthesis; 4-methyl-5-(2-phosphoethyl)-thiazole from 5-(2-hydroxyethyl)-4-methylthiazole: step 1/1. Its function is as follows. Catalyzes the phosphorylation of the hydroxyl group of 4-methyl-5-beta-hydroxyethylthiazole (THZ). The protein is Hydroxyethylthiazole kinase of Granulibacter bethesdensis (strain ATCC BAA-1260 / CGDNIH1).